A 1013-amino-acid chain; its full sequence is EF-hand calcium-binding domain-containing protein 6 (1013 aa).

5 consecutive EF-hand domains span residues 20-55, 145-180, 251-286, 287-322, and 352-387; these read KNIKTVMKAFKLIDVNKTGLVRPQELRRVLETFCLK, KSYEKIEKALSAGDPCKGGYVSFNYLKIVLDTFIYQ, DRSASLKKALLIINTKPDGPITREEFRYILNCVAIK, LSDSEFKELMQILDPGDTGVVNTSMFIDLIEENCRM, and RNLQAFYNMLRSYDLGDTGLIGRNNFKKIMHVFCPF. Residues 441-460 form a disordered region; it reads QKDEQQQPDLSERTKPTEDK. EF-hand domains follow at residues 482–517, 589–624, 695–730, 731–766, 812–847, and 917–952; these read QQDPAFKKRFLDFSKEPNGKINVHDFRKILEDTGMP, ESFRDPYSAFFKTDVDRDGIINMHDLHRLLLHLLLN, NRWSDLSKNFLETDNEGNGILRRRDIKNALYGFDIP, LTPREFEKLWARYNTEGKGHITYQEFLQKLGINYSP, DLHQDISKAFTKIDKSKTNYISICKMQKVLEECGCS, and SSQLALSTAFSALDKEDTGFVKATEFGQVLKDFCYK. Asp602, Asp604, Asp606, and Asp613 together coordinate Ca(2+). Thr732 is subject to Phosphothreonine.

As to quaternary structure, microtubule inner protein component of sperm flagellar doublet microtubules. Binds PARK7. Part of a ternary complex containing PARK7, EFCAB6/DJBP and AR.

The protein resides in the nucleus. Its subcellular location is the cytoplasm. The protein localises to the cytoskeleton. It localises to the flagellum axoneme. Functionally, negatively regulates the androgen receptor by recruiting histone deacetylase complex, and protein DJ-1 antagonizes this inhibition by abrogation of this complex. Microtubule inner protein (MIP) part of the dynein-decorated doublet microtubules (DMTs) in cilia axoneme, which is required for motile cilia beating. The polypeptide is EF-hand calcium-binding domain-containing protein 6 (EFCAB6) (Pongo abelii (Sumatran orangutan)).